The primary structure comprises 485 residues: Glutamyl-tRNA(Gln) amidotransferase subunit A (485 aa).

Catalysis depends on charge relay system residues lysine 78 and serine 153. Serine 177 functions as the Acyl-ester intermediate in the catalytic mechanism.

The protein belongs to the amidase family. GatA subfamily. Heterotrimer of A, B and C subunits.

It carries out the reaction L-glutamyl-tRNA(Gln) + L-glutamine + ATP + H2O = L-glutaminyl-tRNA(Gln) + L-glutamate + ADP + phosphate + H(+). Its function is as follows. Allows the formation of correctly charged Gln-tRNA(Gln) through the transamidation of misacylated Glu-tRNA(Gln) in organisms which lack glutaminyl-tRNA synthetase. The reaction takes place in the presence of glutamine and ATP through an activated gamma-phospho-Glu-tRNA(Gln). The sequence is that of Glutamyl-tRNA(Gln) amidotransferase subunit A from Syntrophus aciditrophicus (strain SB).